Reading from the N-terminus, the 360-residue chain is MKPSIVAKLEALQERHEEVQALLGDAGVIADQDRFRALSREYAQLTDVSHCFLAWRQVQDDLTTAEMLLDDPEMRDMAQEELKEARGRLAELEQQLQILLLPKDPDDERDCFLEVRAGTGGDEAALFAGDLFRMYSRYAEARRWRIEIMSASEGEHGGYKEVIARVSGDGAYGRLKFESGGHRVQRVPATESQGRIHTSACTVAVMPAVPEAELPQINPADLRIDTYRSSGAGGQHVNTTDSAIRITHLPTGIVVECQDERSQHKNKAKAMSVLGARIRAAEIAKRQQEEASTRRNLLGSGDRSDRVRTYNFPQGRVTDHRINLTLYRLDEVMEGKLDNLIEPIVQEHQADQLSALAEQE.

Position 235 is an N5-methylglutamine (Q235). A disordered region spans residues 285 to 304; that stretch reads KRQQEEASTRRNLLGSGDRS.

This sequence belongs to the prokaryotic/mitochondrial release factor family. Methylated by PrmC. Methylation increases the termination efficiency of RF1.

The protein localises to the cytoplasm. In terms of biological role, peptide chain release factor 1 directs the termination of translation in response to the peptide chain termination codons UAG and UAA. This Edwardsiella ictaluri (strain 93-146) protein is Peptide chain release factor 1.